The sequence spans 388 residues: Chorismate synthase (388 aa).

NADP(+) is bound by residues Arg39 and Arg45. FMN-binding positions include 130-132 (RSS), 251-252 (NA), Gly296, 311-315 (KPIPT), and Arg337.

Belongs to the chorismate synthase family. In terms of assembly, homotetramer. FMNH2 serves as cofactor.

It catalyses the reaction 5-O-(1-carboxyvinyl)-3-phosphoshikimate = chorismate + phosphate. It participates in metabolic intermediate biosynthesis; chorismate biosynthesis; chorismate from D-erythrose 4-phosphate and phosphoenolpyruvate: step 7/7. Functionally, catalyzes the anti-1,4-elimination of the C-3 phosphate and the C-6 proR hydrogen from 5-enolpyruvylshikimate-3-phosphate (EPSP) to yield chorismate, which is the branch point compound that serves as the starting substrate for the three terminal pathways of aromatic amino acid biosynthesis. This reaction introduces a second double bond into the aromatic ring system. The sequence is that of Chorismate synthase from Streptococcus pyogenes serotype M1.